Here is a 1103-residue protein sequence, read N- to C-terminus: DNA polymerase delta catalytic subunit (1103 aa).

Residues 1 to 29 (MDFKRRQGPGPGVPPKRARGGLWDEDEPS) form a disordered region. The Nuclear localization signal motif lies at 4–19 (KRRQGPGPGVPPKRAR). Position 19 is an omega-N-methylarginine (R19). A Glycyl lysine isopeptide (Lys-Gly) (interchain with G-Cter in SUMO2) cross-link involves residue K570. C1008, C1011, C1022, and C1025 together coordinate Zn(2+). The CysA-type zinc finger occupies 1008–1025 (CIGCRSVINHQGAVCEFC). Residues C1054, C1057, C1067, and C1072 each contribute to the [4Fe-4S] cluster site. The short motif at 1054 to 1072 (CQRCQGSLHEDVICTSRDC) is the CysB motif element.

It belongs to the DNA polymerase type-B family. In terms of assembly, component of the tetrameric DNA polymerase delta complex (Pol-delta4), which consists of POLD1/p125, POLD2/p50, POLD3/p66/p68 and POLD4/p12, with POLD1 bearing both DNA polymerase and 3' to 5' proofreading exonuclease activities. Within Pol-delta4, directly interacts with POLD2 and POLD4. Following genotoxic stress by DNA-damaging agents, such as ultraviolet light and methyl methanesulfonate, or by replication stress induced by treatment with hydroxyurea or aphidicolin, Pol-delta4 is converted into a trimeric form of the complex (Pol-delta3) by POLD4 degradation. Pol-delta3 is the major form at S phase replication sites and DNA damage sites. POLD1 displays different catalytic properties depending upon the complex it is found in. It exhibits higher proofreading activity and fidelity than Pol-delta4, making it particularly well suited to respond to DNA damage. Directly interacts with PCNA, as do POLD3 and POLD4; this interaction stimulates Pol-delta4 polymerase activity. As POLD2 and POLD4, directly interacts with WRNIP1; this interaction stimulates DNA polymerase delta-mediated DNA synthesis, independently of the presence of PCNA. This stimulation may be due predominantly to an increase of initiation frequency and also to increased processivity. Also observed as a dimeric complex with POLD2 (Pol-delta2). Pol-delta2 is relatively insensitive to the PCNA stimulation (2-5-fold) compared to Pol-delta4 that is stimulated by over 50-fold. The DNA polymerase delta complex interacts with POLDIP2; this interaction is probably mediated through direct binding to POLD2. Interacts with CIAO1. Interacts with POLDIP2. Interacts with RFC1. [4Fe-4S] cluster is required as a cofactor.

It localises to the nucleus. The enzyme catalyses DNA(n) + a 2'-deoxyribonucleoside 5'-triphosphate = DNA(n+1) + diphosphate. Regulated by alteration of quaternary structure. Exhibits burst rates of DNA synthesis are about 5 times faster in the presence of POLD4 (Pol-delta4 complex) than in its absence (Pol-delta3 complex), while the affinity of the enzyme for its DNA and dNTP substrates appears unchanged. The Pol-delta3 complex is more likely to proofread DNA synthesis because it cleaves single-stranded DNA twice as fast and transfers mismatched DNA from the polymerase to the exonuclease sites 9 times faster compared to the Pol-delta3 complex. Pol-delta3 also extends mismatched primers 3 times more slowly in the absence of POLD4. The conversion of Pol-delta4 into Pol-delta3 is induced by genotoxic stress or by replication stress leading POLD4 degradation. Stimulated in the presence of PCNA. This stimulation is further increased in the presence of KCTD13/PDIP1, most probably via direct interaction between KCTD13 and POLD2. Functionally, as the catalytic component of the trimeric (Pol-delta3 complex) and tetrameric DNA polymerase delta complexes (Pol-delta4 complex), plays a crucial role in high fidelity genome replication, including in lagging strand synthesis, and repair. Exhibits both DNA polymerase and 3'- to 5'-exonuclease activities. Requires the presence of accessory proteins POLD2, POLD3 and POLD4 for full activity. Depending upon the absence (Pol-delta3) or the presence of POLD4 (Pol-delta4), displays differences in catalytic activity. Most notably, expresses higher proofreading activity in the context of Pol-delta3 compared with that of Pol-delta4. Although both Pol-delta3 and Pol-delta4 process Okazaki fragments in vitro, Pol-delta3 may be better suited to fulfill this task, exhibiting near-absence of strand displacement activity compared to Pol-delta4 and stalling on encounter with the 5'-blocking oligonucleotides. Pol-delta3 idling process may avoid the formation of a gap, while maintaining a nick that can be readily ligated. Along with DNA polymerase kappa, DNA polymerase delta carries out approximately half of nucleotide excision repair (NER) synthesis following UV irradiation. Under conditions of DNA replication stress, in the presence of POLD3 and POLD4, may catalyze the repair of broken replication forks through break-induced replication (BIR). Involved in the translesion synthesis (TLS) of templates carrying O6-methylguanine, 8oxoG or abasic sites. This chain is DNA polymerase delta catalytic subunit (POLD1), found in Mesocricetus auratus (Golden hamster).